The primary structure comprises 443 residues: Tubulin beta-3 chain (443 aa).

Positions 11, 69, 138, 142, 143, 144, 204, and 226 each coordinate GTP. Glu-69 contacts Mg(2+).

The protein belongs to the tubulin family. In terms of assembly, dimer of alpha and beta chains. A typical microtubule is a hollow water-filled tube with an outer diameter of 25 nm and an inner diameter of 15 nM. Alpha-beta heterodimers associate head-to-tail to form protofilaments running lengthwise along the microtubule wall with the beta-tubulin subunit facing the microtubule plus end conferring a structural polarity. Microtubules usually have 13 protofilaments but different protofilament numbers can be found in some organisms and specialized cells. It depends on Mg(2+) as a cofactor.

The protein resides in the cytoplasm. It localises to the cytoskeleton. Functionally, tubulin is the major constituent of microtubules, a cylinder consisting of laterally associated linear protofilaments composed of alpha- and beta-tubulin heterodimers. Microtubules grow by the addition of GTP-tubulin dimers to the microtubule end, where a stabilizing cap forms. Below the cap, tubulin dimers are in GDP-bound state, owing to GTPase activity of alpha-tubulin. This Echinococcus multilocularis (Fox tapeworm) protein is Tubulin beta-3 chain (TUB-3).